The chain runs to 132 residues: Large ribosomal subunit protein bL19 (132 aa).

It belongs to the bacterial ribosomal protein bL19 family.

Its function is as follows. This protein is located at the 30S-50S ribosomal subunit interface and may play a role in the structure and function of the aminoacyl-tRNA binding site. The sequence is that of Large ribosomal subunit protein bL19 from Persephonella marina (strain DSM 14350 / EX-H1).